Here is a 177-residue protein sequence, read N- to C-terminus: Adenine phosphoribosyltransferase (177 aa).

It belongs to the purine/pyrimidine phosphoribosyltransferase family. In terms of assembly, homodimer.

It is found in the cytoplasm. It catalyses the reaction AMP + diphosphate = 5-phospho-alpha-D-ribose 1-diphosphate + adenine. The protein operates within purine metabolism; AMP biosynthesis via salvage pathway; AMP from adenine: step 1/1. Functionally, catalyzes a salvage reaction resulting in the formation of AMP, that is energically less costly than de novo synthesis. The chain is Adenine phosphoribosyltransferase from Prosthecochloris aestuarii (strain DSM 271 / SK 413).